The sequence spans 510 residues: MKKTVILSVIDGLGLREEKQGNAFKLAKTPNFDKLFNEYPNSVIQASGDYVGLPDDQMGNSEVGHLNIGAGQIVYTGLSLINKDIKDNKFKQNAKFIAAFNAVKKNNETNTLHLMGLLSDGGVHSHEEHLFKLIEAAHENGLKNVSVHVFGDGRDVAPRSILTSIKKLEAITKKYNYAIGSIMGRFYAMDRDQIFTRNEQALEVMMGKTTNYFTNASEYIKAQYQKDISDEFFIPAINKDYLAKKLNLKDNDAVIFYNFRPDRARQLSHLLIQSNLYNYQSKNQVKLSNFTSMMKYEGLDTNIAYEEMKITNPLGNILAKNGLSQLRIAETQKYAHVTFFFDGGNDVLYENEERILIDSVKADSFADYPEMSAAGITDTLIANLGKYDVIILNYANPDMVGHTGNLKATIKALEFLDFQYGKILKAIEKTNHTLFITADHGNAEITEDENGNPATKHTTSPVMLIVTDKNLKLNSGTLANIAPTILDYLKIPKPKNMLDSLIMNNKRTSK.

Mn(2+) contacts are provided by aspartate 11 and serine 61. Serine 61 functions as the Phosphoserine intermediate in the catalytic mechanism. Residues histidine 124, 154-155 (RD), arginine 185, arginine 191, 260-263 (RPDR), and lysine 333 each bind substrate. The Mn(2+) site is built by aspartate 398, histidine 402, aspartate 439, histidine 440, and histidine 457.

Belongs to the BPG-independent phosphoglycerate mutase family. As to quaternary structure, monomer. It depends on Mn(2+) as a cofactor.

It catalyses the reaction (2R)-2-phosphoglycerate = (2R)-3-phosphoglycerate. Its pathway is carbohydrate degradation; glycolysis; pyruvate from D-glyceraldehyde 3-phosphate: step 3/5. Functionally, catalyzes the interconversion of 2-phosphoglycerate and 3-phosphoglycerate. In Mycoplasma mobile (strain ATCC 43663 / 163K / NCTC 11711) (Mesomycoplasma mobile), this protein is 2,3-bisphosphoglycerate-independent phosphoglycerate mutase.